The sequence spans 150 residues: 3-hydroxyacyl-[acyl-carrier-protein] dehydratase FabZ (150 aa).

Residue histidine 54 is part of the active site.

This sequence belongs to the thioester dehydratase family. FabZ subfamily.

The protein localises to the cytoplasm. It carries out the reaction a (3R)-hydroxyacyl-[ACP] = a (2E)-enoyl-[ACP] + H2O. Involved in unsaturated fatty acids biosynthesis. Catalyzes the dehydration of short chain beta-hydroxyacyl-ACPs and long chain saturated and unsaturated beta-hydroxyacyl-ACPs. The chain is 3-hydroxyacyl-[acyl-carrier-protein] dehydratase FabZ from Vibrio campbellii (strain ATCC BAA-1116).